A 157-amino-acid chain; its full sequence is Phosphopantetheine adenylyltransferase (157 aa).

Residue Ser-8 participates in substrate binding. ATP is bound by residues 8–9 (SF) and His-16. Substrate contacts are provided by Lys-40, Thr-72, and Arg-86. ATP is bound by residues 87-89 (GLR), Glu-97, and 122-128 (YSFLSSS).

The protein belongs to the bacterial CoaD family. As to quaternary structure, homohexamer. Requires Mg(2+) as cofactor.

The protein resides in the cytoplasm. It carries out the reaction (R)-4'-phosphopantetheine + ATP + H(+) = 3'-dephospho-CoA + diphosphate. It participates in cofactor biosynthesis; coenzyme A biosynthesis; CoA from (R)-pantothenate: step 4/5. Functionally, reversibly transfers an adenylyl group from ATP to 4'-phosphopantetheine, yielding dephospho-CoA (dPCoA) and pyrophosphate. The sequence is that of Phosphopantetheine adenylyltransferase from Gloeothece citriformis (strain PCC 7424) (Cyanothece sp. (strain PCC 7424)).